A 76-amino-acid polypeptide reads, in one-letter code: Antimicrobial peptide Smp24 (76 aa).

The N-terminal stretch at 1–22 (MQYKTFLVIFMAYLLVTHEAEA) is a signal peptide. Residues 47–76 (SKRKRDVEDFFDPYQRDLDLELERLLSQLQ) constitute a propeptide that is removed on maturation.

It belongs to the non-disulfide-bridged peptide (NDBP) superfamily. Medium-length antimicrobial peptide (group 3) family. Expressed by the venom gland.

The protein resides in the secreted. It localises to the target cell membrane. Peptide that shows antimicrobial activity, moderate cytolysis on eukaryote cells and interference with DNA synthesis. Has potent activity against Gram-positive bacteria and moderate activity against Gram-negative bacteria, as well as moderate activity against fungi. Acts by inducing bacterial membrane disruption. Uses multiple modes of action depending on the membrane lipid composition. Uses a toroidal pore mechanism against the prokaryotic like membrane and forms hexagonal phase non-lamellar structures in eukaryotic-like membrane. Shows activity against B.subtilis (MIC=4 ug/ml), S.epidermidis (MIC=8 ug/ml), S.aureus (MIC=8 ug/ml), E.coli (MIC=64 ug/ml), K.pneumoniae (MIC=128 ug/ml), P.aeruginosa (MIC=256 ug/ml), and C.albicans (MIC=32 ug/ml). Shows moderate hemolysis activity. In Scorpio palmatus (Israeli golden scorpion), this protein is Antimicrobial peptide Smp24.